A 59-amino-acid chain; its full sequence is Membrane-associated ATPase epsilon chain (59 aa).

To E.hirae NtpH. As to quaternary structure, sul-ATPase is composed of six (or maybe five) subunits: alpha, beta, delta, gamma, C (proteolipid), and possibly epsilon.

The catalysed reaction is ATP + H2O + 4 H(+)(in) = ADP + phosphate + 5 H(+)(out). This is Membrane-associated ATPase epsilon chain (atpE) from Sulfurisphaera tokodaii (strain DSM 16993 / JCM 10545 / NBRC 100140 / 7) (Sulfolobus tokodaii).